The sequence spans 104 residues: Large ribosomal subunit protein uL24 (104 aa).

The protein belongs to the universal ribosomal protein uL24 family. As to quaternary structure, part of the 50S ribosomal subunit.

Functionally, one of two assembly initiator proteins, it binds directly to the 5'-end of the 23S rRNA, where it nucleates assembly of the 50S subunit. In terms of biological role, one of the proteins that surrounds the polypeptide exit tunnel on the outside of the subunit. The sequence is that of Large ribosomal subunit protein uL24 from Shewanella piezotolerans (strain WP3 / JCM 13877).